Reading from the N-terminus, the 548-residue chain is mRNA cleavage and polyadenylation factor CLP1 (548 aa).

ATP-binding positions include glutamate 19, lysine 60, and serine 123–threonine 128. The span at glutamate 437 to glutamate 481 shows a compositional bias: basic and acidic residues. Residues glutamate 437 to glutamate 500 form a disordered region. A compositionally biased stretch (acidic residues) spans glutamate 482–glutamate 494.

It belongs to the Clp1 family. Clp1 subfamily. As to quaternary structure, component of a pre-mRNA cleavage factor complex. Interacts directly with PCF11.

It is found in the nucleus. In terms of biological role, required for endonucleolytic cleavage during polyadenylation-dependent pre-mRNA 3'-end formation. The sequence is that of mRNA cleavage and polyadenylation factor CLP1 from Cryptococcus neoformans var. neoformans serotype D (strain B-3501A) (Filobasidiella neoformans).